The primary structure comprises 118 residues: MRNKYIEAFENAQIENKSVPDFRAGDTLRIAIRIKEGDKTRVQNFEGICIARRGSGSGETFIIRKIGANSVGVERIFPIYSESLESITVLRRGRIRRSKLFYLRDRRGKAARIKELKK.

Belongs to the bacterial ribosomal protein bL19 family.

Functionally, this protein is located at the 30S-50S ribosomal subunit interface and may play a role in the structure and function of the aminoacyl-tRNA binding site. This Campylobacter fetus subsp. fetus (strain 82-40) protein is Large ribosomal subunit protein bL19.